The sequence spans 426 residues: Serine--tRNA ligase (426 aa).

228-230 is a binding site for L-serine; sequence TSE. Residues 259 to 261 and valine 275 contribute to the ATP site; that span reads RRE. Position 282 (glutamate 282) interacts with L-serine. 346-349 lines the ATP pocket; it reads ELTS. Threonine 386 contributes to the L-serine binding site.

The protein belongs to the class-II aminoacyl-tRNA synthetase family. Type-1 seryl-tRNA synthetase subfamily. Homodimer. The tRNA molecule binds across the dimer.

The protein localises to the cytoplasm. It carries out the reaction tRNA(Ser) + L-serine + ATP = L-seryl-tRNA(Ser) + AMP + diphosphate + H(+). The enzyme catalyses tRNA(Sec) + L-serine + ATP = L-seryl-tRNA(Sec) + AMP + diphosphate + H(+). Its pathway is aminoacyl-tRNA biosynthesis; selenocysteinyl-tRNA(Sec) biosynthesis; L-seryl-tRNA(Sec) from L-serine and tRNA(Sec): step 1/1. Catalyzes the attachment of serine to tRNA(Ser). Is also able to aminoacylate tRNA(Sec) with serine, to form the misacylated tRNA L-seryl-tRNA(Sec), which will be further converted into selenocysteinyl-tRNA(Sec). The sequence is that of Serine--tRNA ligase from Arthrobacter sp. (strain FB24).